The sequence spans 122 residues: Large ribosomal subunit protein bL12 (122 aa).

It belongs to the bacterial ribosomal protein bL12 family. As to quaternary structure, homodimer. Part of the ribosomal stalk of the 50S ribosomal subunit. Forms a multimeric L10(L12)X complex, where L10 forms an elongated spine to which 2 to 4 L12 dimers bind in a sequential fashion. Binds GTP-bound translation factors.

In terms of biological role, forms part of the ribosomal stalk which helps the ribosome interact with GTP-bound translation factors. Is thus essential for accurate translation. This chain is Large ribosomal subunit protein bL12, found in Deinococcus geothermalis (strain DSM 11300 / CIP 105573 / AG-3a).